The sequence spans 702 residues: ATP-dependent RNA helicase DDX4 (702 aa).

Residues 22 to 228 (FEKDKYSSGA…YIPPPPPEDE (207 aa)) form a disordered region. A compositionally biased stretch (polar residues) spans 29 to 46 (SGANGDTFNRTSASSDIG). 2 stretches are compositionally biased toward gly residues: residues 58–68 (GGFGRGKGFGN) and 125–137 (RGSF…GFGL). Composition is skewed to polar residues over residues 141–150 (NSESDQDQGT) and 195–215 (SGKN…SQGP). Serine 195 and serine 199 each carry phosphoserine. Residues 201–220 (KSETEGGESSDSQGPKVTYI) form an interaction with RANBP9 region. Positions 261 to 289 (LTFEEANLCQTLNNNIAKAGYTKLTPVQK) match the Q motif motif. Positions 292 to 475 (IPIVLAGRDL…GDFLKSSYLF (184 aa)) constitute a Helicase ATP-binding domain. 305-312 (AQTGSGKT) contributes to the ATP binding site. The DEAD box signature appears at 419–422 (DEAD). Residues 503–648 (KLVEILRNIG…DVPAWLEEIA (146 aa)) enclose the Helicase C-terminal domain. Polar residues predominate over residues 681 to 693 (TLNTAGISSSQAP). The disordered stretch occupies residues 681–702 (TLNTAGISSSQAPNPVDDESWD). Position 700 is a phosphoserine (serine 700).

This sequence belongs to the DEAD box helicase family. DDX4/VASA subfamily. Found in a mRNP complex, at least composed of TDRD1, TDRD6, TDRD7 and DDX4. Interacts with RANBP9. Interacts with RANBP10. Interacts with PIWIL2 and MAEL. Interacts with BMAL1 and CLOCK. Interacts with Tex19.1 and, probably, Tex19.2. Interacts with RBM46. Testis-specific.

It is found in the cytoplasm. Its subcellular location is the perinuclear region. It carries out the reaction ATP + H2O = ADP + phosphate + H(+). ATP-dependent RNA helicase required during spermatogenesis to repress transposable elements and preventing their mobilization, which is essential for the germline integrity. Acts via the piRNA metabolic process, which mediates the repression of transposable elements during meiosis by forming complexes composed of piRNAs and Piwi proteins and governs the methylation and subsequent repression of transposons. Involved in the secondary piRNAs metabolic process, the production of piRNAs in fetal male germ cells through a ping-pong amplification cycle. Required for PIWIL2 slicing-triggered piRNA biogenesis: helicase activity enables utilization of one of the slice cleavage fragments generated by PIWIL2 and processing these pre-piRNAs into piRNAs. This Mus musculus (Mouse) protein is ATP-dependent RNA helicase DDX4.